Consider the following 396-residue polypeptide: Elongation factor Tu (396 aa).

The tr-type G domain occupies 10–206; sequence KPHCNIGTIG…AVDAYIPQPE (197 aa). Residues 19 to 26 form a G1 region; it reads GHVDHGKT. 19–26 contacts GTP; the sequence is GHVDHGKT. Thr26 lines the Mg(2+) pocket. Positions 60–64 are G2; the sequence is GITIS. The tract at residues 81–84 is G3; that stretch reads DCPG. GTP contacts are provided by residues 81–85 and 136–139; these read DCPGH and NKVD. Residues 136–139 are G4; sequence NKVD. Positions 174–176 are G5; the sequence is SAL.

Belongs to the TRAFAC class translation factor GTPase superfamily. Classic translation factor GTPase family. EF-Tu/EF-1A subfamily. As to quaternary structure, monomer.

It is found in the cytoplasm. The enzyme catalyses GTP + H2O = GDP + phosphate + H(+). In terms of biological role, GTP hydrolase that promotes the GTP-dependent binding of aminoacyl-tRNA to the A-site of ribosomes during protein biosynthesis. The chain is Elongation factor Tu from Granulibacter bethesdensis (strain ATCC BAA-1260 / CGDNIH1).